Consider the following 1137-residue polypeptide: Isoleucine--tRNA ligase (1137 aa).

The short motif at 50–60 (PSANGMPGIHH) is the 'HIGH' region element. Positions 688-692 (KMSKR) match the 'KMSKS' region motif. K691 is a binding site for ATP.

Belongs to the class-I aminoacyl-tRNA synthetase family. IleS type 2 subfamily. Monomer. Zn(2+) is required as a cofactor.

The protein resides in the cytoplasm. The enzyme catalyses tRNA(Ile) + L-isoleucine + ATP = L-isoleucyl-tRNA(Ile) + AMP + diphosphate. In terms of biological role, catalyzes the attachment of isoleucine to tRNA(Ile). As IleRS can inadvertently accommodate and process structurally similar amino acids such as valine, to avoid such errors it has two additional distinct tRNA(Ile)-dependent editing activities. One activity is designated as 'pretransfer' editing and involves the hydrolysis of activated Val-AMP. The other activity is designated 'posttransfer' editing and involves deacylation of mischarged Val-tRNA(Ile). The chain is Isoleucine--tRNA ligase from Porphyromonas gingivalis (strain ATCC BAA-308 / W83).